A 911-amino-acid chain; its full sequence is Valine--tRNA ligase (911 aa).

The 'HIGH' region signature appears at 57–67 (PTVSGSLHVGH). Positions 599-603 (KMSKS) match the 'KMSKS' region motif. An ATP-binding site is contributed by Lys-602. Residues 882-911 (EESAAEDAPETEVAVEASELGEPPAKKPKH) are disordered.

It belongs to the class-I aminoacyl-tRNA synthetase family. ValS type 2 subfamily. In terms of assembly, monomer.

The protein resides in the cytoplasm. The catalysed reaction is tRNA(Val) + L-valine + ATP = L-valyl-tRNA(Val) + AMP + diphosphate. Functionally, catalyzes the attachment of valine to tRNA(Val). As ValRS can inadvertently accommodate and process structurally similar amino acids such as threonine, to avoid such errors, it has a 'posttransfer' editing activity that hydrolyzes mischarged Thr-tRNA(Val) in a tRNA-dependent manner. The protein is Valine--tRNA ligase of Bifidobacterium longum (strain DJO10A).